The chain runs to 61 residues: Putative antitoxin RelB2 (61 aa).

In terms of biological role, antitoxin component of a type II toxin-antitoxin (TA) system. Its cognate toxin is RelE2 (Potential). The chain is Putative antitoxin RelB2 (relB2) from Methanocaldococcus jannaschii (strain ATCC 43067 / DSM 2661 / JAL-1 / JCM 10045 / NBRC 100440) (Methanococcus jannaschii).